The chain runs to 159 residues: 3-hydroxyacyl-[acyl-carrier-protein] dehydratase FabZ (159 aa).

H58 is a catalytic residue.

Belongs to the thioester dehydratase family. FabZ subfamily.

The protein localises to the cytoplasm. The enzyme catalyses a (3R)-hydroxyacyl-[ACP] = a (2E)-enoyl-[ACP] + H2O. Its function is as follows. Involved in unsaturated fatty acids biosynthesis. Catalyzes the dehydration of short chain beta-hydroxyacyl-ACPs and long chain saturated and unsaturated beta-hydroxyacyl-ACPs. This chain is 3-hydroxyacyl-[acyl-carrier-protein] dehydratase FabZ, found in Helicobacter pylori (strain Shi470).